The chain runs to 658 residues: MYPPPAPPPAPHRDFISVTLSLGESYDNSKSRRRRSCWRKWKQLSRLQRNVILFVLGFLILCGFLYSLHTADQWKALSGRPAEVEKMKQEVLPVLPAPQKESAEQEGFADILSQKRQRHFRRGPPHLQIRPPNTVSKDGMQDDAKEREAALGKAQQEENTQRTVISWRGAVIEPEQATELPYKRAEASIKPLVLASKIWKEPAPPNERQKGVIEAFLHAWKGYQKFAWGHDELKPVSKTFSEWFGLGLTLIDALDTMWILGLKQEFKQARKWVSENLDFQKNVDVNLFESTIRILGGLLSTYHLSGDSLFLTKAEDFGKRLMPAFTTPSKIPYSDVNIGTGFAHSPQWTSDSTVAEVTSIQLEFRELSRLTGIKKFQEAVEEVTKHIHSLSGKKDGLVPMFINTNSGLFTHPGVFTLGARADSYYEYLLKQWIQGGKKETQLLEDYVKAIEGIKAHLLRQSQPRKLTFVGELAHGRFSAKMDHLVCFLPGTLALGVHHGLPADHMDLARALMETCYQMNQQMETGLSPEIAHFNMYPRADHKDVEVKPADRHNLLRPETVESLFYLYRVTRDRKYQDWGWEILQSFNKYTRVPSGGYSSINNVQNSHKPEPRDKMESFFVGETLKYLYLLFSDDLELLSLDSCVFNTEAHPLPIWAPA.

Residues 1–50 (MYPPPAPPPAPHRDFISVTLSLGESYDNSKSRRRRSCWRKWKQLSRLQRN) lie on the Cytoplasmic side of the membrane. The chain crosses the membrane as a helical; Signal-anchor for type II membrane protein span at residues 51 to 71 (VILFVLGFLILCGFLYSLHTA). The Lumenal portion of the chain corresponds to 72–658 (DQWKALSGRP…AHPLPIWAPA (587 aa)). Ser-102 carries the post-translational modification Phosphoserine. The tract at residues 123–142 (GPPHLQIRPPNTVSKDGMQD) is disordered. Glu-289 acts as the Proton donor in catalysis. Asp-422 is a catalytic residue. A disulfide bridge links Cys-486 with Cys-515. The Proton donor role is filled by Glu-529. Residue Glu-558 is part of the active site. Thr-647 provides a ligand contact to Ca(2+).

Belongs to the glycosyl hydrolase 47 family. It depends on Ca(2+) as a cofactor.

The protein localises to the endoplasmic reticulum membrane. The enzyme catalyses N(4)-(alpha-D-Man-(1-&gt;2)-alpha-D-Man-(1-&gt;2)-alpha-D-Man-(1-&gt;3)-[alpha-D-Man-(1-&gt;2)-alpha-D-Man-(1-&gt;3)-[alpha-D-Man-(1-&gt;2)-alpha-D-Man-(1-&gt;6)]-alpha-D-Man-(1-&gt;6)]-beta-D-Man-(1-&gt;4)-beta-D-GlcNAc-(1-&gt;4)-beta-D-GlcNAc)-L-asparaginyl-[protein] (N-glucan mannose isomer 9A1,2,3B1,2,3) + 4 H2O = N(4)-(alpha-D-Man-(1-&gt;3)-[alpha-D-Man-(1-&gt;3)-[alpha-D-Man-(1-&gt;6)]-alpha-D-Man-(1-&gt;6)]-beta-D-Man-(1-&gt;4)-beta-D-GlcNAc-(1-&gt;4)-beta-D-GlcNAc)-L-asparaginyl-[protein] (N-glucan mannose isomer 5A1,2) + 4 beta-D-mannose. The catalysed reaction is N(4)-(alpha-D-Man-(1-&gt;2)-alpha-D-Man-(1-&gt;2)-alpha-D-Man-(1-&gt;3)-[alpha-D-Man-(1-&gt;3)-[alpha-D-Man-(1-&gt;2)-alpha-D-Man-(1-&gt;6)]-alpha-D-Man-(1-&gt;6)]-beta-D-Man-(1-&gt;4)-beta-D-GlcNAc-(1-&gt;4)-beta-D-GlcNAc)-L-asparaginyl-[protein] (N-glucan mannose isomer 8A1,2,3B1,3) + 3 H2O = N(4)-(alpha-D-Man-(1-&gt;3)-[alpha-D-Man-(1-&gt;3)-[alpha-D-Man-(1-&gt;6)]-alpha-D-Man-(1-&gt;6)]-beta-D-Man-(1-&gt;4)-beta-D-GlcNAc-(1-&gt;4)-beta-D-GlcNAc)-L-asparaginyl-[protein] (N-glucan mannose isomer 5A1,2) + 3 beta-D-mannose. Its pathway is protein modification; protein glycosylation. Involved in glycoprotein quality control targeting of misfolded glycoproteins for degradation. It primarily trims a single alpha-1,2-linked mannose residue from Man(9)GlcNAc(2) to produce Man(8)GlcNAc(2), but at high enzyme concentrations, as found in the ER quality control compartment (ERQC), it further trims the carbohydrates to Man(5-6)GlcNAc(2). The sequence is that of Endoplasmic reticulum mannosyl-oligosaccharide 1,2-alpha-mannosidase (Man1b1) from Mus musculus (Mouse).